The primary structure comprises 1068 residues: Cytospin-B (1068 aa).

The disordered stretch occupies residues 1 to 221 (MRSAAKPWNP…VDGTSVSPGD (221 aa)). The N-myristoyl glycine moiety is linked to residue Arg-2. Residues 29–40 (SSGMKSSKSSTS) show a composition bias toward low complexity. Phosphoserine is present on residues Ser-38 and Ser-55. Thr-78 carries the post-translational modification Phosphothreonine. 5 positions are modified to phosphoserine: Ser-112, Ser-131, Ser-134, Ser-137, and Ser-138. Residues 126–144 (SNPRKSVSSPTSSNTPTPT) are compositionally biased toward low complexity. Thr-142 bears the Phosphothreonine mark. Residues 154–200 (PKQENEGGEKAALESQVRELLAEAKAKDSEINRLRSELKKYKEKRTL) are compositionally biased toward basic and acidic residues. Residues Ser-218 and Ser-241 each carry the phosphoserine modification. Composition is skewed to polar residues over residues 261–295 (PNSEGAASHTGDSSCPTSITQESSFGSPTGNQMSS), 309–323 (LRTSGSSSSDVTKAS), and 337–367 (ETPSRPLSSTSNPFKSSKCSTAGSSPNSVSE). Residues 261–367 (PNSEGAASHT…AGSSPNSVSE (107 aa)) are disordered. Phosphoserine is present on residues Ser-361, Ser-366, Ser-369, and Ser-425. Positions 579-773 (EVQEMLKVAR…QKELGDVQGH (195 aa)) form a coiled coil. Residues 777 to 796 (VTSRAAPPPVDEEPESSEVD) are disordered. Residues Ser-847 and Ser-863 each carry the phosphoserine modification. 2 disordered regions span residues 859 to 885 (AAAVSPMQRHSTYSSVRPASRGVTQRL) and 898 to 922 (GRTETLKPDPHLRKSPSLESLSRPP). Polar residues predominate over residues 866–875 (QRHSTYSSVR). The span at 898 to 909 (GRTETLKPDPHL) shows a compositional bias: basic and acidic residues. A phosphoserine mark is found at Ser-912 and Ser-914. The segment covering 912-922 (SPSLESLSRPP) has biased composition (low complexity). In terms of domain architecture, Calponin-homology (CH) spans 962–1067 (GSKRNALLKW…YVAQIYKYFE (106 aa)).

The protein belongs to the cytospin-A family. Highly expressed in testis. Barely detectable in other tissues. Also highly expressed in some cancer cell lines.

Its subcellular location is the nucleus. The protein localises to the membrane. This Homo sapiens (Human) protein is Cytospin-B (SPECC1).